Here is a 437-residue protein sequence, read N- to C-terminus: Citrate synthase (437 aa).

Active-site residues include His316 and Asp372.

It belongs to the citrate synthase family. As to quaternary structure, homohexamer.

It catalyses the reaction oxaloacetate + acetyl-CoA + H2O = citrate + CoA + H(+). It functions in the pathway carbohydrate metabolism; tricarboxylic acid cycle; isocitrate from oxaloacetate: step 1/2. Weakly inhibited by ATP (apparent Ki = 10 mm). This is Citrate synthase (gltA) from Corynebacterium glutamicum (strain ATCC 13032 / DSM 20300 / JCM 1318 / BCRC 11384 / CCUG 27702 / LMG 3730 / NBRC 12168 / NCIMB 10025 / NRRL B-2784 / 534).